The following is a 288-amino-acid chain: MADDTPIIEEIAEQNESVTRIMQRLKHDMQRVTSVPGFNTSAAGVNDLIDILNQYKKELEDDAANDYTEAHIHKIRLVTGKRNQYVLKLKQAEDEYHARKEQARRRASSMDFTVGRNSTNLVDYSHGRHHMPSYRRHDSSDEENYSMDGTNGDGNRAGPSNPDRGNRTGPSSSDRVRMRAGRNRVTKTRRYRPGQKALEEIRKYQKTEDLLIQKAPFARLVREIMQTSTPFGADCRIRSDAISALQEAAEAFLVEMFEGSSLISTHAKRVTLMTTDIQLYRRLCLRHL.

Residues 96–194 (YHARKEQARR…VTKTRRYRPG (99 aa)) are disordered. The span at 178-193 (MRAGRNRVTKTRRYRP) shows a compositional bias: basic residues. Positions 191 to 288 (YRPGQKALEE…LYRRLCLRHL (98 aa)) are H3-like.

This sequence belongs to the histone H3 family. As to quaternary structure, forms a nucleosome-like histone octamer containing two molecules each of H2A, H2B, hcp-3 and H4 assembled in one hcp-3-H4 heterotetramer and two H2A-H2B heterodimers. The hcp-3-H4 heterotetramer is more compact and structurally more rigid than corresponding H3-H4 heterotetramers. Interacts with knl-2. Interacts with lin-53.

Its subcellular location is the nucleus. The protein localises to the chromosome. It is found in the centromere. The protein resides in the kinetochore. In terms of biological role, histone H3-like variant which exclusively replaces conventional H3 in the nucleosome core of centromeric chromatin at the inner plate of the kinetochore. Required for recruitment and assembly of kinetochore proteins, mitotic progression and chromosome segregation. May serve as an epigenetic mark that propagates centromere identity through replication and cell division. Might promote cleavage furrow stability during cytokinesis. Not required for chromosome segregation during meiosis. The polypeptide is Histone H3-like centromeric protein hcp-3 (Caenorhabditis elegans).